The sequence spans 257 residues: Diacetyl reductase [(S)-acetoin forming] (257 aa).

6–30 (IITGAAGGLGKGIAERLANDGFNIV) is an NAD(+) binding site. Residue Ser-139 coordinates substrate. The Proton acceptor role is filled by Tyr-152. Residue Lys-156 is part of the active site.

This sequence belongs to the short-chain dehydrogenases/reductases (SDR) family.

The catalysed reaction is (S)-acetoin + NAD(+) = diacetyl + NADH + H(+). Its function is as follows. Catalyzes the irreversible reduction of 2,3-butanediol to (S)-acetoin in the presence of NADH. This chain is Diacetyl reductase [(S)-acetoin forming] (butA), found in Staphylococcus epidermidis (strain ATCC 12228 / FDA PCI 1200).